We begin with the raw amino-acid sequence, 40 residues long: Spodomicin (40 aa).

3 cysteine pairs are disulfide-bonded: cysteine 6–cysteine 20, cysteine 10–cysteine 32, and cysteine 21–cysteine 39.

As to quaternary structure, monomer. Contains three disulfide bonds. As to expression, hemolymph.

Its subcellular location is the secreted. In terms of biological role, fungicide. The sequence is that of Spodomicin from Spodoptera littoralis (Egyptian cotton leafworm).